The primary structure comprises 507 residues: Tabersonine/lochnericine 19-hydroxylase (507 aa).

Residues 8 to 28 (FFVLLLPFFIGIAFIYKLWNF) traverse the membrane as a helical segment. Asn167 carries an N-linked (GlcNAc...) asparagine glycan. Cys447 is a heme binding site.

The protein belongs to the cytochrome P450 family. The cofactor is heme. In terms of tissue distribution, confined to roots.

Its subcellular location is the endoplasmic reticulum membrane. The catalysed reaction is (-)-tabersonine + reduced [NADPH--hemoprotein reductase] + O2 = (-)-(R)-19-hydroxytabersonine + oxidized [NADPH--hemoprotein reductase] + H2O + H(+). The enzyme catalyses lochnericine + reduced [NADPH--hemoprotein reductase] + O2 = horhammericine + oxidized [NADPH--hemoprotein reductase] + H2O + H(+). It carries out the reaction (-)-vincadifformine + reduced [NADPH--hemoprotein reductase] + O2 = (-)-minovincinine + oxidized [NADPH--hemoprotein reductase] + H2O + H(+). Its pathway is alkaloid biosynthesis. In terms of biological role, component of the monoterpenoid indole alkaloids (MIAs, e.g. echitovenine, tabersonine, lochnericine, 19-hydroxytabersonine and horhammericine) biosynthetic pathway; MIAs are used in cancer treatment and other medical applications. Cytochrome P450 catalyzing the conversion of (-)-tabersonine to 19-hydroxytabersonine, of lochnericine to horhammericine and of (-)-vincadifformine to (-)-minovincinine. In Catharanthus roseus (Madagascar periwinkle), this protein is Tabersonine/lochnericine 19-hydroxylase.